A 293-amino-acid chain; its full sequence is Bifunctional monothiol glutaredoxin-S16, chloroplastic (293 aa).

The N-terminal 62 residues, M1–I62, are a transit peptide targeting the chloroplast. A disulfide bond links C123 and C219. The 100-residue stretch at E194–N293 folds into the Glutaredoxin domain. K211 provides a ligand contact to glutathione. C219 contributes to the [2Fe-2S] cluster binding site. Glutathione-binding positions include R251, F263, and C276–D277.

Belongs to the glutaredoxin family. CGFS subfamily. In terms of assembly, [2Fe-2S]-bridged holo-homodimer. Interacts in vitro with SUFE1, BOLA1, BOLA2 and BOLA4. Interacts in vivo only with SUFE1, BOLA1 and BOLA4. Interacts with SBP1.

Its subcellular location is the plastid. The protein localises to the chloroplast. The formation of an intramolecular disulfide bond negatively regulates both the N-terminal endonuclease and the C-terminal glutaredoxin activities. Functionally, may only reduce GSH-thiol disulfides, but not protein disulfides. Participates probably to the maturation of iron-sulfur proteins and to the regulation of the redox state of the BOLA proteins. The GRXS16-BOLA1 heterodimer binds a labile, oxygen sensitive iron-sulfur cluster. Able to cleave linearized DNA in vitro. The polypeptide is Bifunctional monothiol glutaredoxin-S16, chloroplastic (Arabidopsis thaliana (Mouse-ear cress)).